The chain runs to 385 residues: 1-deoxy-D-xylulose 5-phosphate reductoisomerase (385 aa).

Residues Thr-10, Gly-11, Ser-12, Ile-13, and Asn-124 each coordinate NADPH. Lys-125 provides a ligand contact to 1-deoxy-D-xylulose 5-phosphate. Glu-126 serves as a coordination point for NADPH. Asp-150 is a binding site for Mn(2+). 1-deoxy-D-xylulose 5-phosphate-binding residues include Ser-151, Glu-152, Ser-176, and His-199. A Mn(2+)-binding site is contributed by Glu-152. NADPH is bound at residue Gly-205. Ser-212, Asn-217, Lys-218, and Glu-221 together coordinate 1-deoxy-D-xylulose 5-phosphate. Residue Glu-221 coordinates Mn(2+).

The protein belongs to the DXR family. Mg(2+) serves as cofactor. Mn(2+) is required as a cofactor.

The enzyme catalyses 2-C-methyl-D-erythritol 4-phosphate + NADP(+) = 1-deoxy-D-xylulose 5-phosphate + NADPH + H(+). It functions in the pathway isoprenoid biosynthesis; isopentenyl diphosphate biosynthesis via DXP pathway; isopentenyl diphosphate from 1-deoxy-D-xylulose 5-phosphate: step 1/6. Its function is as follows. Catalyzes the NADPH-dependent rearrangement and reduction of 1-deoxy-D-xylulose-5-phosphate (DXP) to 2-C-methyl-D-erythritol 4-phosphate (MEP). The polypeptide is 1-deoxy-D-xylulose 5-phosphate reductoisomerase (Clostridium botulinum (strain Eklund 17B / Type B)).